Here is a 276-residue protein sequence, read N- to C-terminus: NADPH-dependent 7-cyano-7-deazaguanine reductase (276 aa).

A substrate-binding site is contributed by 83 to 85 (IES). 85 to 86 (SK) lines the NADPH pocket. Cysteine 184 (thioimide intermediate) is an active-site residue. Aspartate 191 serves as the catalytic Proton donor. 223 to 224 (HE) is a binding site for substrate. Position 252–253 (252–253 (RG)) interacts with NADPH.

Belongs to the GTP cyclohydrolase I family. QueF type 2 subfamily. Homodimer.

It localises to the cytoplasm. It catalyses the reaction 7-aminomethyl-7-carbaguanine + 2 NADP(+) = 7-cyano-7-deazaguanine + 2 NADPH + 3 H(+). It functions in the pathway tRNA modification; tRNA-queuosine biosynthesis. In terms of biological role, catalyzes the NADPH-dependent reduction of 7-cyano-7-deazaguanine (preQ0) to 7-aminomethyl-7-deazaguanine (preQ1). In Pseudomonas savastanoi pv. phaseolicola (strain 1448A / Race 6) (Pseudomonas syringae pv. phaseolicola (strain 1448A / Race 6)), this protein is NADPH-dependent 7-cyano-7-deazaguanine reductase.